The sequence spans 469 residues: Phosphoenolpyruvate carboxylase (469 aa).

Belongs to the PEPCase type 2 family. Homotetramer. Requires Mg(2+) as cofactor.

It carries out the reaction oxaloacetate + phosphate = phosphoenolpyruvate + hydrogencarbonate. In terms of biological role, catalyzes the irreversible beta-carboxylation of phosphoenolpyruvate (PEP) to form oxaloacetate (OAA), a four-carbon dicarboxylic acid source for the tricarboxylic acid cycle. In Pyrococcus horikoshii (strain ATCC 700860 / DSM 12428 / JCM 9974 / NBRC 100139 / OT-3), this protein is Phosphoenolpyruvate carboxylase.